The primary structure comprises 120 residues: Small ribosomal subunit protein uS13 (120 aa).

The disordered stretch occupies residues 93–120; it reads RRGLPCRGQKTKTNARTRKGKRKTVGAA.

It belongs to the universal ribosomal protein uS13 family. As to quaternary structure, part of the 30S ribosomal subunit. Forms a loose heterodimer with protein S19. Forms two bridges to the 50S subunit in the 70S ribosome.

Its function is as follows. Located at the top of the head of the 30S subunit, it contacts several helices of the 16S rRNA. In the 70S ribosome it contacts the 23S rRNA (bridge B1a) and protein L5 of the 50S subunit (bridge B1b), connecting the 2 subunits; these bridges are implicated in subunit movement. Contacts the tRNAs in the A and P-sites. The chain is Small ribosomal subunit protein uS13 from Sulfurovum sp. (strain NBC37-1).